The following is a 307-amino-acid chain: F-box protein At5g03100 (307 aa).

Positions 8–54 (VDFISSLPDEILHHILANTPTKLAIRTSVLSKRWKHVWYETPSISIV) constitute an F-box domain.

This Arabidopsis thaliana (Mouse-ear cress) protein is F-box protein At5g03100.